We begin with the raw amino-acid sequence, 479 residues long: Bifunctional protein HldE (479 aa).

Residues 1 to 319 (MTVILPDFLK…NVVQKYEYTK (319 aa)) are ribokinase. 195–198 (NMSE) lines the ATP pocket. The active site involves aspartate 264. Positions 346 to 479 (MTNGVFDILH…IDTMEINEIN (134 aa)) are cytidylyltransferase.

The protein in the N-terminal section; belongs to the carbohydrate kinase PfkB family. It in the C-terminal section; belongs to the cytidylyltransferase family. In terms of assembly, homodimer.

It catalyses the reaction D-glycero-beta-D-manno-heptose 7-phosphate + ATP = D-glycero-beta-D-manno-heptose 1,7-bisphosphate + ADP + H(+). It carries out the reaction D-glycero-beta-D-manno-heptose 1-phosphate + ATP + H(+) = ADP-D-glycero-beta-D-manno-heptose + diphosphate. It participates in nucleotide-sugar biosynthesis; ADP-L-glycero-beta-D-manno-heptose biosynthesis; ADP-L-glycero-beta-D-manno-heptose from D-glycero-beta-D-manno-heptose 7-phosphate: step 1/4. It functions in the pathway nucleotide-sugar biosynthesis; ADP-L-glycero-beta-D-manno-heptose biosynthesis; ADP-L-glycero-beta-D-manno-heptose from D-glycero-beta-D-manno-heptose 7-phosphate: step 3/4. Functionally, catalyzes the phosphorylation of D-glycero-D-manno-heptose 7-phosphate at the C-1 position to selectively form D-glycero-beta-D-manno-heptose-1,7-bisphosphate. Its function is as follows. Catalyzes the ADP transfer from ATP to D-glycero-beta-D-manno-heptose 1-phosphate, yielding ADP-D-glycero-beta-D-manno-heptose. The chain is Bifunctional protein HldE from Blochmanniella floridana.